A 66-amino-acid chain; its full sequence is Large ribosomal subunit protein bL35 (66 aa).

Belongs to the bacterial ribosomal protein bL35 family.

This Ruegeria pomeroyi (strain ATCC 700808 / DSM 15171 / DSS-3) (Silicibacter pomeroyi) protein is Large ribosomal subunit protein bL35.